Consider the following 172-residue polypeptide: Large ribosomal subunit protein uL10 (172 aa).

The protein belongs to the universal ribosomal protein uL10 family. Part of the ribosomal stalk of the 50S ribosomal subunit. The N-terminus interacts with L11 and the large rRNA to form the base of the stalk. The C-terminus forms an elongated spine to which L12 dimers bind in a sequential fashion forming a multimeric L10(L12)X complex.

Functionally, forms part of the ribosomal stalk, playing a central role in the interaction of the ribosome with GTP-bound translation factors. This Rhizobium etli (strain ATCC 51251 / DSM 11541 / JCM 21823 / NBRC 15573 / CFN 42) protein is Large ribosomal subunit protein uL10.